A 643-amino-acid polypeptide reads, in one-letter code: Thioredoxin reductase 3 (643 aa).

The segment at 1–53 (MERSPPQSPGPGKAGDAPNRRSGHVRGARVLSPPGRRARLSSPGPSRSSEARE) is disordered. Position 26 is an asymmetric dimethylarginine; alternate (Arg-26). Arg-26 is modified (omega-N-methylarginine; alternate). Ser-41 and Ser-42 each carry phosphoserine. A Glutaredoxin domain is found at 56-156 (RRHLVGLIER…KLLQEDLAYD (101 aa)). 158-187 (DLIIIGGGSGGLSCAKEAAILGKKVMVLDF) provides a ligand contact to FAD. Cys-203 and Cys-208 form a disulfide bridge. Residue Lys-379 is modified to N6-succinyllysine. His-616 serves as the catalytic Proton acceptor. Positions 641–642 (CU) form a cross-link, cysteinyl-selenocysteine (Cys-Sec). Sec-642 is a non-standard amino acid (selenocysteine).

This sequence belongs to the class-I pyridine nucleotide-disulfide oxidoreductase family. In terms of assembly, homodimer. Requires FAD as cofactor.

The protein localises to the cytoplasm. It localises to the nucleus. It is found in the microsome. Its subcellular location is the endoplasmic reticulum. It carries out the reaction [thioredoxin]-dithiol + NADP(+) = [thioredoxin]-disulfide + NADPH + H(+). Displays thioredoxin reductase, glutaredoxin and glutathione reductase activities. Catalyzes disulfide bond isomerization. Promotes disulfide bond formation between GPX4 and various sperm proteins and may play a role in sperm maturation by promoting formation of sperm structural components. This is Thioredoxin reductase 3 from Homo sapiens (Human).